The sequence spans 92 residues: Protein S100-A6 (92 aa).

EF-hand domains are found at residues 12–47 (LVAI…IGAE) and 48–83 (LEDS…LAMI). Residues Thr28 and Glu33 each coordinate Ca(2+). Lys40 bears the N6-acetyllysine mark. Positions 61, 63, 65, and 72 each coordinate Ca(2+).

Belongs to the S-100 family. In terms of assembly, homodimer; head to tail assembly of 2 subunits. Interacts with CACYBP in a calcium-dependent manner. Interacts with ANXA2 and ANXA11 (via N-terminus). Interacts with SUGT1. Interacts with TP53; has higher affinity for TP53 that is phosphorylated on its N-terminal domain, and lower affinity for TP53 that is phosphorylated on its C-terminal domain. Interacts with tropomyosin. Interacts with FKBP4. Interacts with PPP5C (via TPR repeats); the interaction is calcium-dependent and modulates PPP5C activity. Interacts with TPPP; this interaction inhibits TPPP dimerization.

The protein localises to the nucleus envelope. The protein resides in the cytoplasm. Its subcellular location is the cell membrane. May function as calcium sensor and modulator, contributing to cellular calcium signaling. May function by interacting with other proteins, such as TPR-containing proteins, and indirectly play a role in many physiological processes such as the reorganization of the actin cytoskeleton and in cell motility. Binds 2 calcium ions. Calcium binding is cooperative. The chain is Protein S100-A6 (S100A6) from Equus caballus (Horse).